Consider the following 473-residue polypeptide: GTPase Der (473 aa).

EngA-type G domains lie at 5 to 170 (PVVA…PNQE) and 178 to 351 (LKLA…QSSM). Residues 11–18 (GRPNVGKS), 58–62 (DTGGI), 123–126 (NKVD), 184–191 (GRPNVGKS), 231–235 (DTAGV), and 296–299 (NKWD) each bind GTP. Positions 352 to 436 (FEVSTNRLTQ…PLNVVFKLNE (85 aa)) constitute a KH-like domain. Over residues 438–454 (PYANKSDTPTKAKTQQL) the composition is skewed to polar residues. The segment at 438–473 (PYANKSDTPTKAKTQQLRQRERNRAQKFTTKDKKPR) is disordered. Residues 455-473 (RQRERNRAQKFTTKDKKPR) are compositionally biased toward basic and acidic residues.

The protein belongs to the TRAFAC class TrmE-Era-EngA-EngB-Septin-like GTPase superfamily. EngA (Der) GTPase family. As to quaternary structure, associates with the 50S ribosomal subunit.

Functionally, GTPase that plays an essential role in the late steps of ribosome biogenesis. This chain is GTPase Der, found in Psychrobacter arcticus (strain DSM 17307 / VKM B-2377 / 273-4).